The chain runs to 527 residues: ATP-dependent RNA helicase DBP3 (527 aa).

Residues 1–11 (MSKDHKDKKRK) show a composition bias toward basic residues. The interval 1 to 89 (MSKDHKDKKR…TGYSQSPALT (89 aa)) is disordered. Positions 12–24 (HSDEATEEVEKKT) are enriched in basic and acidic residues. Positions 25 to 44 (KVSKKEKKDKKEKKEKKDKK) are enriched in basic residues. Positions 45–71 (EKKDKSEKKDKSEKKEKKEKKESEDVP) are enriched in basic and acidic residues. Residues 72 to 89 (TKSSAVVSTGYSQSPALT) show a composition bias toward polar residues. The Q motif signature appears at 119–145 (LGFDQIDLDSRIASVISKFPTPTPIQA). In terms of domain architecture, Helicase ATP-binding spans 148–319 (WPYLLSGKDV…STFMNSPVKV (172 aa)). An ATP-binding site is contributed by 161–168 (AETGSGKT). The DEAD box motif lies at 266–269 (DEAD). One can recognise a Helicase C-terminal domain in the interval 348 to 497 (KLLSLLRKYQ…PVPDELLKFG (150 aa)).

It belongs to the DEAD box helicase family. DDX5/DBP2 subfamily.

It localises to the nucleus. It is found in the nucleolus. The catalysed reaction is ATP + H2O = ADP + phosphate + H(+). In terms of biological role, ATP-dependent RNA helicase required for 60S ribosomal subunit synthesis. Involved in efficient pre-rRNA processing, predominantly at site A3, which is necessary for the normal formation of 25S and 5.8S rRNAs. The chain is ATP-dependent RNA helicase DBP3 (DBP3) from Debaryomyces hansenii (strain ATCC 36239 / CBS 767 / BCRC 21394 / JCM 1990 / NBRC 0083 / IGC 2968) (Yeast).